The primary structure comprises 291 residues: BTB/POZ domain-containing protein 19 (291 aa).

The BTB domain occupies 29-98 (SDVCFVVGQE…LYTNSVKLYR (70 aa)). The BACK domain maps to 134–234 (CEALQVAVTF…LALLAPAELS (101 aa)).

The protein is BTB/POZ domain-containing protein 19 (BTBD19) of Homo sapiens (Human).